We begin with the raw amino-acid sequence, 205 residues long: Holliday junction branch migration complex subunit RuvA (205 aa).

The tract at residues 1–62 is domain I; sequence MFEYVTGYVE…EDIMALYGFK (62 aa). A domain II region spans residues 63–141; sequence TREERLLFTK…DVVPDAFVDL (79 aa). Residues 142 to 152 are flexible linker; that stretch reads FSDTERFDEKK. A domain III region spans residues 153–205; it reads GTSAELDEALEALRALGYAEREVSRVVPELLKESLTTDQYIKKALSLLLNGKR.

It belongs to the RuvA family. In terms of assembly, homotetramer. Forms an RuvA(8)-RuvB(12)-Holliday junction (HJ) complex. HJ DNA is sandwiched between 2 RuvA tetramers; dsDNA enters through RuvA and exits via RuvB. An RuvB hexamer assembles on each DNA strand where it exits the tetramer. Each RuvB hexamer is contacted by two RuvA subunits (via domain III) on 2 adjacent RuvB subunits; this complex drives branch migration. In the full resolvosome a probable DNA-RuvA(4)-RuvB(12)-RuvC(2) complex forms which resolves the HJ.

The protein localises to the cytoplasm. Functionally, the RuvA-RuvB-RuvC complex processes Holliday junction (HJ) DNA during genetic recombination and DNA repair, while the RuvA-RuvB complex plays an important role in the rescue of blocked DNA replication forks via replication fork reversal (RFR). RuvA specifically binds to HJ cruciform DNA, conferring on it an open structure. The RuvB hexamer acts as an ATP-dependent pump, pulling dsDNA into and through the RuvAB complex. HJ branch migration allows RuvC to scan DNA until it finds its consensus sequence, where it cleaves and resolves the cruciform DNA. This is Holliday junction branch migration complex subunit RuvA from Bacillus cereus (strain G9842).